Reading from the N-terminus, the 734-residue chain is Polyribonucleotide nucleotidyltransferase (734 aa).

Mg(2+)-binding residues include D497 and D503. The KH domain occupies 564 to 623 (PRIIHITIDPDKIRDVIGPGGKVIKKIVEETGAEIDIEDDGRVFIAAVDQEKGRKAQEII). An S1 motif domain is found at 633–707 (GEIYTGRVTR…SQGRLKLSKK (75 aa)). The interval 700–734 (GRLKLSKKEATPPPESTAMKEGRAHRPSRRRESAR) is disordered. Over residues 717-734 (AMKEGRAHRPSRRRESAR) the composition is skewed to basic and acidic residues.

The protein belongs to the polyribonucleotide nucleotidyltransferase family. It depends on Mg(2+) as a cofactor.

It localises to the cytoplasm. The catalysed reaction is RNA(n+1) + phosphate = RNA(n) + a ribonucleoside 5'-diphosphate. In terms of biological role, involved in mRNA degradation. Catalyzes the phosphorolysis of single-stranded polyribonucleotides processively in the 3'- to 5'-direction. This is Polyribonucleotide nucleotidyltransferase from Pelotomaculum thermopropionicum (strain DSM 13744 / JCM 10971 / SI).